A 236-amino-acid polypeptide reads, in one-letter code: MDEQIFIQLLENNLTNSKSYVTQPIILEFKTDVFLIINQILKQYKKGKIIKNNTNEIILEIDNKLISITNLDINKFHSYQIVNINENKNIYNERNSLILFDLVNYIIEKNQNSIRHINFWTIQMSVVNWIYFITYNFNNSYLIDPNWKKYVFKIKKDESKGVISTNLLHNYGFVDFVVQSKSQNFLKAYRVQDEILKSVLNLGDNLNNEFLEEIMRKYDTYKIIDRDHKYLVINIE.

This is an uncharacterized protein from Ureaplasma parvum serovar 3 (strain ATCC 700970).